A 539-amino-acid polypeptide reads, in one-letter code: Phosphoenolpyruvate carboxykinase (ATP) (539 aa).

The substrate site is built by arginine 64, tyrosine 206, and lysine 212. ATP-binding positions include lysine 212, histidine 231, and 247–255; that span reads GLSGTGKTT. Residues lysine 212 and histidine 231 each contribute to the Mn(2+) site. Aspartate 268 contacts Mn(2+). Residues glutamate 296, arginine 332, 448 to 449, and threonine 454 each bind ATP; that span reads RI. Arginine 332 is a binding site for substrate.

It belongs to the phosphoenolpyruvate carboxykinase (ATP) family. As to quaternary structure, monomer. It depends on Mn(2+) as a cofactor.

It is found in the cytoplasm. It carries out the reaction oxaloacetate + ATP = phosphoenolpyruvate + ADP + CO2. It participates in carbohydrate biosynthesis; gluconeogenesis. Its function is as follows. Involved in the gluconeogenesis. Catalyzes the conversion of oxaloacetate (OAA) to phosphoenolpyruvate (PEP) through direct phosphoryl transfer between the nucleoside triphosphate and OAA. This chain is Phosphoenolpyruvate carboxykinase (ATP), found in Salmonella agona (strain SL483).